The following is an 899-amino-acid chain: Auxin response factor 25 (899 aa).

Positions 1 to 20 are disordered; that stretch reads MKLSPPASADMPQALPENDG. The TF-B3 DNA-binding region spans 132 to 234; that stretch reads FCKTLTASDT…QLLLGIRRAN (103 aa). Residues 546-564 are compositionally biased toward low complexity; it reads RQHVLQEQSSQEMQQQLPS. Residues 546–586 are disordered; that stretch reads RQHVLQEQSSQEMQQQLPSSDHHVADVASESGSAPQAQSSL. Polar residues predominate over residues 575–586; the sequence is ESGSAPQAQSSL. One can recognise a PB1 domain in the interval 766-850; it reads ATFVKVYKSG…WCIKILSPQE (85 aa).

This sequence belongs to the ARF family. Homodimers and heterodimers. In terms of tissue distribution, expressed in roots, culms, leaves and young panicles.

The protein localises to the nucleus. Its function is as follows. Auxin response factors (ARFs) are transcriptional factors that bind specifically to the DNA sequence 5'-TGTCTC-3' found in the auxin-responsive promoter elements (AuxREs). The polypeptide is Auxin response factor 25 (ARF25) (Oryza sativa subsp. japonica (Rice)).